We begin with the raw amino-acid sequence, 182 residues long: uncharacterized protein (182 aa).

2 helical membrane-spanning segments follow: residues 76 to 96 (LLLA…LALA) and 114 to 130 (LDLL…LIGA).

It is found in the membrane. This is an uncharacterized protein from Saccharomyces cerevisiae (strain ATCC 204508 / S288c) (Baker's yeast).